The chain runs to 666 residues: DEAD-box ATP-dependent RNA helicase 30 (666 aa).

The segment at 53–102 (PDPNLPRRLPFPSSSSTPTAAAPPDSGEPSRARARTETYRTGDMNPYDLR) is disordered. The span at 64–76 (PSSSSTPTAAAPP) shows a compositional bias: low complexity. Positions 80–92 (EPSRARARTETYR) are enriched in basic and acidic residues. The Q motif motif lies at 251–279 (RYFQEANFPDYCMQAIAKSGFVEPTPIQS). One can recognise a Helicase ATP-binding domain in the interval 282-457 (WPMALKGRDM…RQFLQNPYKV (176 aa)). 295–302 (AQTGSGKT) provides a ligand contact to ATP. The DEAD box motif lies at 405 to 408 (DEAD). The region spanning 485-630 (RLSKLLSDLM…VVNPALESMA (146 aa)) is the Helicase C-terminal domain. Positions 632 to 666 (SASSMGGGNFRSRGRGGFGNRSGSNSIPIRGRRPY) are disordered. Residues 636–651 (MGGGNFRSRGRGGFGN) show a composition bias toward gly residues.

Belongs to the DEAD box helicase family. DDX5/DBP2 subfamily.

Its subcellular location is the nucleus. It catalyses the reaction ATP + H2O = ADP + phosphate + H(+). In terms of biological role, ATP-dependent RNA helicase involved nonsense-mediated mRNA decay and ribosome biogenesis through rRNA processing. This is DEAD-box ATP-dependent RNA helicase 30 from Oryza sativa subsp. japonica (Rice).